The chain runs to 596 residues: Transketolase-like protein 1 (596 aa).

His-46 lines the substrate pocket. Thiamine diphosphate-binding positions include Ser-49 and 94–96 (GWL). Asp-126 lines the Mg(2+) pocket. Thiamine diphosphate contacts are provided by Gly-127 and Asn-156. Mg(2+)-binding residues include Asn-156 and Leu-158. Positions 218 and 232 each coordinate thiamine diphosphate. Residues His-232, Arg-292, and Ser-319 each contribute to the substrate site. Thiamine diphosphate contacts are provided by Glu-340 and Phe-366. The active-site Proton donor is Glu-340. The substrate site is built by His-390 and Asp-398. Gln-402 lines the thiamine diphosphate pocket. Arg-448 contributes to the substrate binding site.

Belongs to the transketolase family. In terms of assembly, homodimer. Mg(2+) is required as a cofactor. It depends on Ca(2+) as a cofactor. Requires Mn(2+) as cofactor. The cofactor is Co(2+). Thiamine diphosphate serves as cofactor.

The protein localises to the cytoplasm. It carries out the reaction D-sedoheptulose 7-phosphate + D-glyceraldehyde 3-phosphate = aldehydo-D-ribose 5-phosphate + D-xylulose 5-phosphate. In terms of biological role, catalyzes the transfer of a two-carbon ketol group from a ketose donor to an aldose acceptor, via a covalent intermediate with the cofactor thiamine pyrophosphate. The sequence is that of Transketolase-like protein 1 (TKTL1) from Macaca fascicularis (Crab-eating macaque).